A 444-amino-acid chain; its full sequence is Glutamyl-tRNA reductase (444 aa).

Residues 49-52, serine 109, 114-116, and glutamine 120 each bind substrate; these read TCNR and ETQ. Cysteine 50 functions as the Nucleophile in the catalytic mechanism. 189-194 lines the NADP(+) pocket; that stretch reads GAGKMG.

Belongs to the glutamyl-tRNA reductase family. As to quaternary structure, homodimer.

It carries out the reaction (S)-4-amino-5-oxopentanoate + tRNA(Glu) + NADP(+) = L-glutamyl-tRNA(Glu) + NADPH + H(+). Its pathway is porphyrin-containing compound metabolism; protoporphyrin-IX biosynthesis; 5-aminolevulinate from L-glutamyl-tRNA(Glu): step 1/2. In terms of biological role, catalyzes the NADPH-dependent reduction of glutamyl-tRNA(Glu) to glutamate 1-semialdehyde (GSA). This Bacillus cereus (strain 03BB102) protein is Glutamyl-tRNA reductase.